Consider the following 345-residue polypeptide: Serine proteinase inhibitor 2 (345 aa).

Belongs to the serpin family. Poxviruses subfamily.

Its subcellular location is the host cytoplasm. Its function is as follows. Viral serpin that inhibits both cysteine and serine proteinases involved in the regulation of host inflammatory and apoptosis processes. Major anti-apoptotic protein which inhibits both intrinsic and extrinsic pathways and strongly cleaves host CASP1 and CASP8 but is a rather poor inhibitor of host CASP3. Prevents the proteolytic activity of host interleukin-1-beta converting enzyme (ICE) and ICE-like enzymes. Can also block apoptosis through host tumor necrosis factor (TNF) receptor. The inhibition of host ICE is an example of a 'cross-class' interaction, in which a serpin inhibits a non-serine proteinase. Also inhibits granzyme B. This Vaccinia virus (strain Western Reserve) (VACV) protein is Serine proteinase inhibitor 2 (OPG199).